The chain runs to 221 residues: Putative NAD(P)H nitroreductase YfkO (221 aa).

FMN is bound by residues 15–17 and 73–75; these read RHA and QKQ. 157–162 provides a ligand contact to NAD(+); that stretch reads AAAQIG. FMN-binding positions include 169–170 and Arg-211; that span reads EG.

This sequence belongs to the nitroreductase family. Monomer. FMN serves as cofactor.

This chain is Putative NAD(P)H nitroreductase YfkO (yfkO), found in Bacillus subtilis (strain 168).